The following is a 642-amino-acid chain: Threonine--tRNA ligase (642 aa).

The 61-residue stretch at 1–61 (MPVITLPDGS…ETDVDLAIIT (61 aa)) folds into the TGS domain. Positions 243-534 (DHRKIGKQLD…LIEEYAGKFP (292 aa)) are catalytic. The Zn(2+) site is built by Cys-334, His-385, and His-511.

This sequence belongs to the class-II aminoacyl-tRNA synthetase family. In terms of assembly, homodimer. Zn(2+) is required as a cofactor.

Its subcellular location is the cytoplasm. The catalysed reaction is tRNA(Thr) + L-threonine + ATP = L-threonyl-tRNA(Thr) + AMP + diphosphate + H(+). Its function is as follows. Catalyzes the attachment of threonine to tRNA(Thr) in a two-step reaction: L-threonine is first activated by ATP to form Thr-AMP and then transferred to the acceptor end of tRNA(Thr). Also edits incorrectly charged L-seryl-tRNA(Thr). The protein is Threonine--tRNA ligase of Shewanella loihica (strain ATCC BAA-1088 / PV-4).